The primary structure comprises 304 residues: UDP-N-acetylenolpyruvoylglucosamine reductase (304 aa).

Positions 32 to 198 constitute an FAD-binding PCMH-type domain; that stretch reads RVGGPADILV…LSAELELQEG (167 aa). R177 is an active-site residue. S227 serves as the catalytic Proton donor. The active site involves E297.

The protein belongs to the MurB family. FAD serves as cofactor.

The protein localises to the cytoplasm. It carries out the reaction UDP-N-acetyl-alpha-D-muramate + NADP(+) = UDP-N-acetyl-3-O-(1-carboxyvinyl)-alpha-D-glucosamine + NADPH + H(+). Its pathway is cell wall biogenesis; peptidoglycan biosynthesis. Functionally, cell wall formation. The sequence is that of UDP-N-acetylenolpyruvoylglucosamine reductase from Clostridioides difficile (strain 630) (Peptoclostridium difficile).